The sequence spans 159 residues: Cyclic pyranopterin monophosphate synthase (159 aa).

Substrate-binding positions include 75-77 and 113-114; these read LCH and ME. Residue aspartate 128 is part of the active site.

Belongs to the MoaC family. In terms of assembly, homohexamer; trimer of dimers.

The catalysed reaction is (8S)-3',8-cyclo-7,8-dihydroguanosine 5'-triphosphate = cyclic pyranopterin phosphate + diphosphate. It functions in the pathway cofactor biosynthesis; molybdopterin biosynthesis. Catalyzes the conversion of (8S)-3',8-cyclo-7,8-dihydroguanosine 5'-triphosphate to cyclic pyranopterin monophosphate (cPMP). This Cereibacter sphaeroides (strain ATCC 17023 / DSM 158 / JCM 6121 / CCUG 31486 / LMG 2827 / NBRC 12203 / NCIMB 8253 / ATH 2.4.1.) (Rhodobacter sphaeroides) protein is Cyclic pyranopterin monophosphate synthase.